The chain runs to 255 residues: F-box/SPRY domain-containing protein 1 (255 aa).

Positions 3–51 (DPVAALCNYNVLEVIFSYLELDDLSHCSQVCKSWYHFLNDENSDVWRWH) constitute an F-box domain. A B30.2/SPRY domain is found at 61 to 253 (LKSDLLSSVS…VSMVYLGTPL (193 aa)).

It belongs to the FBXO45/Fsn family. As to quaternary structure, component of an E3 ubiquitin ligase complex composed of hiw and Fsn.

It is found in the synapse. The protein operates within protein modification; protein ubiquitination. Functionally, required in the presynaptic motoneuron to down-regulate the levels of wnd and restrain synaptic terminal growth at the neuromuscular junction (NMJ). In Drosophila simulans (Fruit fly), this protein is F-box/SPRY domain-containing protein 1.